A 72-amino-acid chain; its full sequence is U10-myrmicitoxin-Tb1a (72 aa).

The signal sequence occupies residues 1–26; the sequence is MRVSYLSLTLTIVVVIAIIYAPETEA. Positions 27–36 are excised as a propeptide; sequence KAWADADAEA.

It belongs to the formicidae venom precursor-01 superfamily. As to expression, expressed by the venom gland.

It is found in the secreted. Its function is as follows. In vivo, this neurotoxin paralyzes about 40% of blowflies (L.caesar) one hour after intrathoracic injection, when tested at high doses (28 nmol/g). The sequence is that of U10-myrmicitoxin-Tb1a from Tetramorium bicarinatum (Tramp ant).